A 409-amino-acid chain; its full sequence is Short chain dehydrogenase sirS (409 aa).

The NADP(+) site is built by V49, L68, K195, V288, T290, and A299. Residues 306 to 332 (GVGPEGAGEEEGKGEAEGGAKGATGWS) are disordered.

This sequence belongs to the short-chain dehydrogenases/reductases (SDR) family. Highly divergent.

It functions in the pathway mycotoxin biosynthesis. In terms of biological role, short chain dehydrogenase; part of the gene cluster that mediates the biosynthesis of sirodesmin PL, an epipolythiodioxopiperazine (ETP) characterized by a disulfide bridged cyclic dipeptide and that acts as a phytotoxin which is involved in the blackleg didease of canola. SirD catalyzes the O-prenylation of L-tyrosine (L-Tyr) in the presence of dimethylallyl diphosphate (DMAPP) to yield 4-O-dimethylallyl-L-Tyr, and therefore represents probably the first pathway-specific enzyme in the biosynthesis of sirodesmin PL. 4-O-dimethylallyl-L-Tyr, then undergoes condensation with L-Ser in a reaction catalyzed by the non-ribosomal peptide synthase sirP to form the diketopiperazine (DKP) backbone. Further bishydroxylation of the DKP performed by the cytochrome P450 monooxygenase sirC leads to the production of the intermediate phomamide. This step is essential to form the reactive thiol group required for toxicity of sirodesmin PL. The next steps of sirodesmin biosynthesis are not well understood yet, but some predictions could be made from intermediate compounds identification. Phomamide is converted into phomalizarine via oxidation, probably by sirT. Further oxidation, methylation (by sirM or sirN) and reduction steps convert phomalizarine to deacetyl sirodesmin. Finally, acetyltransferase sirH probably acetylates deacetyl sirodesmin to produce sirodesmin PL. This chain is Short chain dehydrogenase sirS, found in Leptosphaeria maculans (Blackleg fungus).